We begin with the raw amino-acid sequence, 905 residues long: DNA mismatch repair protein MutS (905 aa).

A disordered region spans residues 272–292; that stretch reads KKPPLSPPSREATGSTMAIDP. Residue 654-661 coordinates ATP; that stretch reads GPNMAGKS.

This sequence belongs to the DNA mismatch repair MutS family.

Its function is as follows. This protein is involved in the repair of mismatches in DNA. It is possible that it carries out the mismatch recognition step. This protein has a weak ATPase activity. The sequence is that of DNA mismatch repair protein MutS from Rhodopseudomonas palustris (strain BisB18).